The sequence spans 849 residues: G-type lectin S-receptor-like serine/threonine-protein kinase B120 (849 aa).

The first 25 residues, 1–25 (MRFFRKTSLYLSLFLYFFLYESSMA), serve as a signal peptide directing secretion. The Bulb-type lectin domain occupies 26 to 153 (ANTIRRGESL…DTDRPIWESF (128 aa)). Over 26–438 (ANTIRRGESL…SEVGENRKTK (413 aa)) the chain is Extracellular. Asparagine 110, asparagine 191, asparagine 210, asparagine 230, asparagine 273, and asparagine 282 each carry an N-linked (GlcNAc...) asparagine glycan. One can recognise an EGF-like; atypical domain in the interval 295 to 332 (PDSECDQYNRCGKFGICDMKGSNGICSCIHGYEQVSVG). Disulfide bonds link cysteine 299–cysteine 311 and cysteine 305–cysteine 320. N-linked (GlcNAc...) asparagine glycans are attached at residues asparagine 333, asparagine 349, and asparagine 388. The PAN domain occupies 346-427 (CERNISVGED…GGSSLHIRLA (82 aa)). 2 cysteine pairs are disulfide-bonded: cysteine 381–cysteine 402 and cysteine 385–cysteine 391. A helical transmembrane segment spans residues 439 to 459 (IAVIVAVLVGVILIGIFALLL). Over 460-849 (WRFKRKKDVS…EITSTVVLGR (390 aa)) the chain is Cytoplasmic. The Protein kinase domain maps to 529-814 (FCKENELGRG…TLAAPRQPTF (286 aa)). ATP is bound by residues 535–543 (LGRGGFGPV) and lysine 557. The residue at position 563 (serine 563) is a Phosphoserine. The interval 618–635 (TKQALIDWKLRFSIIEGI) is caM-binding. Aspartate 654 acts as the Proton acceptor in catalysis. Serine 658 and serine 671 each carry phosphoserine. Phosphothreonine is present on threonine 688. Serine 732 and serine 837 each carry phosphoserine. Threonine 844 carries the phosphothreonine modification.

Belongs to the protein kinase superfamily. Ser/Thr protein kinase family.

The protein resides in the cell membrane. The catalysed reaction is L-seryl-[protein] + ATP = O-phospho-L-seryl-[protein] + ADP + H(+). It carries out the reaction L-threonyl-[protein] + ATP = O-phospho-L-threonyl-[protein] + ADP + H(+). The polypeptide is G-type lectin S-receptor-like serine/threonine-protein kinase B120 (B120) (Arabidopsis thaliana (Mouse-ear cress)).